A 1066-amino-acid polypeptide reads, in one-letter code: Thyrotropin-releasing hormone-degrading ectoenzyme (1066 aa).

Positions 1–14 are enriched in basic and acidic residues; that stretch reads MALDGERGEQEEEK. Residues 1 to 43 form a disordered region; it reads MALDGERGEQEEEKKKKKKKKKRKKKEEEGAEKSSSPFAATMG. Topologically, residues 1 to 81 are cytoplasmic; sequence MALDGERGEQ…ERHIAVHKRL (81 aa). The span at 15-25 shows a compositional bias: basic residues; the sequence is KKKKKKKKRKK. The residue at position 71 (Thr71) is a Phosphothreonine; by PKC. Residues 82–102 form a helical; Signal-anchor for type II membrane protein membrane-spanning segment; sequence VLAFAVSIVALLAVTMLAVLL. The Extracellular segment spans residues 103 to 1066; it reads SLRFDECGAS…FQWLGKAMRH (964 aa). Positions 117 to 177 are disordered; the sequence is GTDGGLGGFP…SEEEQEQWQP (61 aa). Residues 118–127 show a composition bias toward gly residues; that stretch reads TDGGLGGFPE. The N-linked (GlcNAc...) asparagine glycan is linked to Asn131. Positions 143–154 are enriched in basic and acidic residues; the sequence is HAGEESSQREIG. Residues Asn202, Asn217, Asn264, and Asn380 are each glycosylated (N-linked (GlcNAc...) asparagine). Residue 446-450 participates in substrate binding; that stretch reads AAMEN. His482 is a binding site for Zn(2+). The Proton acceptor role is filled by Glu483. The Zn(2+) site is built by His486 and Glu505. N-linked (GlcNAc...) asparagine glycans are attached at residues Asn647, Asn676, Asn691, Asn705, Asn726, Asn842, and Asn948.

The protein belongs to the peptidase M1 family. In terms of assembly, homodimer; disulfide-linked. Requires Zn(2+) as cofactor. Predominantly expressed in brain and pituitary. Lower levels in lung and liver.

The protein resides in the membrane. It carries out the reaction Release of the N-terminal pyroglutamyl group from pGlu-|-His-Xaa tripeptides and pGlu-|-His-Xaa-Gly tetrapeptides.. Functionally, specific inactivation of TRH after its release. This is Thyrotropin-releasing hormone-degrading ectoenzyme (Trhde) from Rattus norvegicus (Rat).